The following is a 692-amino-acid chain: Elongation factor G (692 aa).

The tr-type G domain maps to 8 to 282; it reads ENTRNIGIMA…AVIDYLPSPL (275 aa). GTP-binding positions include 17-24, 81-85, and 135-138; these read AHIDAGKT, DTPGH, and NKMD.

It belongs to the TRAFAC class translation factor GTPase superfamily. Classic translation factor GTPase family. EF-G/EF-2 subfamily.

Its subcellular location is the cytoplasm. Its function is as follows. Catalyzes the GTP-dependent ribosomal translocation step during translation elongation. During this step, the ribosome changes from the pre-translocational (PRE) to the post-translocational (POST) state as the newly formed A-site-bound peptidyl-tRNA and P-site-bound deacylated tRNA move to the P and E sites, respectively. Catalyzes the coordinated movement of the two tRNA molecules, the mRNA and conformational changes in the ribosome. The sequence is that of Elongation factor G from Bacillus cereus (strain G9842).